A 401-amino-acid polypeptide reads, in one-letter code: 8-amino-7-oxononanoate synthase (401 aa).

Position 19 (Arg-19) interacts with substrate. 106-107 (GY) is a pyridoxal 5'-phosphate binding site. A substrate-binding site is contributed by His-131. Pyridoxal 5'-phosphate is bound by residues Ser-176, His-204, and Thr-233. An N6-(pyridoxal phosphate)lysine modification is found at Lys-236. Thr-350 contributes to the substrate binding site.

This sequence belongs to the class-II pyridoxal-phosphate-dependent aminotransferase family. BioF subfamily. In terms of assembly, homodimer. Pyridoxal 5'-phosphate serves as cofactor.

It catalyses the reaction 6-carboxyhexanoyl-[ACP] + L-alanine + H(+) = (8S)-8-amino-7-oxononanoate + holo-[ACP] + CO2. It participates in cofactor biosynthesis; biotin biosynthesis. In terms of biological role, catalyzes the decarboxylative condensation of pimeloyl-[acyl-carrier protein] and L-alanine to produce 8-amino-7-oxononanoate (AON), [acyl-carrier protein], and carbon dioxide. This chain is 8-amino-7-oxononanoate synthase, found in Pseudomonas aeruginosa (strain LESB58).